A 224-amino-acid chain; its full sequence is 7-cyano-7-deazaguanine synthase (224 aa).

Position 7-17 (7-17 (LSGGLDSSTIL)) interacts with ATP. 4 residues coordinate Zn(2+): Cys191, Cys199, Cys202, and Cys205.

Belongs to the QueC family. Requires Zn(2+) as cofactor.

It catalyses the reaction 7-carboxy-7-deazaguanine + NH4(+) + ATP = 7-cyano-7-deazaguanine + ADP + phosphate + H2O + H(+). It functions in the pathway purine metabolism; 7-cyano-7-deazaguanine biosynthesis. In terms of biological role, catalyzes the ATP-dependent conversion of 7-carboxy-7-deazaguanine (CDG) to 7-cyano-7-deazaguanine (preQ(0)). This Nostoc punctiforme (strain ATCC 29133 / PCC 73102) protein is 7-cyano-7-deazaguanine synthase.